The following is a 171-amino-acid chain: MHPFYSRAATMIGEIAAAVSFISKFLRTKGLTSERQLQTFSQSLQELLAEHYKHHWFPEKPCKGSGYRCIRINHKMDPLIGQAAQRIGLSSQELFRLLPSELTLWVDPYEVSYRIGEDGSICVLYEASPAGGSTQNSTNVQMVDSRISCKEELLLGRTSPSKNYNMMTVSG.

S159 carries the post-translational modification Phosphoserine.

The protein belongs to the BTG family. In terms of assembly, interacts with CNOT7 and CNOT8.

Functionally, anti-proliferative protein. The sequence is that of Protein BTG1 (BTG1) from Bos taurus (Bovine).